The sequence spans 429 residues: Adenylosuccinate synthetase (429 aa).

GTP contacts are provided by residues 13–19 and 41–43; these read GDEGKGK and GHT. Residue D14 is the Proton acceptor of the active site. The Mg(2+) site is built by D14 and G41. Residues 14–17, 39–42, T130, R144, Q224, T239, and R303 each bind IMP; these read DEGK and NAGH. The active-site Proton donor is H42. Residue 299–305 coordinates substrate; it reads ATTGRAR. Residues R305, 331–333, and 412–414 contribute to the GTP site; these read KLD and STG.

It belongs to the adenylosuccinate synthetase family. In terms of assembly, homodimer. Mg(2+) is required as a cofactor.

The protein resides in the cytoplasm. The enzyme catalyses IMP + L-aspartate + GTP = N(6)-(1,2-dicarboxyethyl)-AMP + GDP + phosphate + 2 H(+). It participates in purine metabolism; AMP biosynthesis via de novo pathway; AMP from IMP: step 1/2. Plays an important role in the de novo pathway of purine nucleotide biosynthesis. Catalyzes the first committed step in the biosynthesis of AMP from IMP. The sequence is that of Adenylosuccinate synthetase from Psychrobacter cryohalolentis (strain ATCC BAA-1226 / DSM 17306 / VKM B-2378 / K5).